A 327-amino-acid chain; its full sequence is Movement protein (327 aa).

Residues 252 to 311 (DLTREEREKAAQLEMLRKTREVHTQRSAEEMKRRQAELAKDTQRKLAEEAKAVTEKRKNM) are a coiled coil. Disordered stretches follow at residues 271–294 (REVHTQRSAEEMKRRQAELAKDTQ) and 307–327 (KRKNMAGVNSSNIKFGNFDSV). Polar residues predominate over residues 313-327 (GVNSSNIKFGNFDSV).

The protein resides in the host cell wall. Its subcellular location is the host cytoplasm. In terms of biological role, transports viral genome to neighboring plant cells directly through plasmosdesmata, without any budding. The movement protein allows efficient cell to cell propagation, by bypassing the host cell wall barrier. The sequence is that of Movement protein from Hordeum vulgare (Barley).